The sequence spans 1510 residues: Chromosome partition protein MukB (1510 aa).

Residues 6–30 (ELENEIELESDEVIMENENVEEIVD) adopt a coiled-coil conformation. Residue 75–82 (GGNGAGKS) participates in ATP binding. Coiled coils occupy residues 346-506 (QHRL…HKMS), 553-633 (QQTP…NLTA), 673-706 (MQSQLVKERELTMQRDQLEQKRLQLDEQISRLSQ), 821-847 (RAAREKRLEELQIERDEVAEQYAQIAF), 876-1064 (EELM…IQLQ), 1094-1149 (ERAR…RELV), and 1249-1305 (DAIE…QNIS). The interval 707–824 (PDGSEDPRLN…EIPLFGRAAR (118 aa)) is flexible hinge.

It belongs to the SMC family. MukB subfamily. As to quaternary structure, homodimerization via its hinge domain. Binds to DNA via its C-terminal region. Interacts, and probably forms a ternary complex, with MukE and MukF via its C-terminal region. The complex formation is stimulated by calcium or magnesium. Interacts with tubulin-related protein FtsZ.

It is found in the cytoplasm. Its subcellular location is the nucleoid. In terms of biological role, plays a central role in chromosome condensation, segregation and cell cycle progression. Functions as a homodimer, which is essential for chromosome partition. Involved in negative DNA supercoiling in vivo, and by this means organize and compact chromosomes. May achieve or facilitate chromosome segregation by condensation DNA from both sides of a centrally located replisome during cell division. The chain is Chromosome partition protein MukB from Haemophilus influenzae (strain 86-028NP).